The primary structure comprises 895 residues: Alanine--tRNA ligase (895 aa).

Zn(2+) is bound by residues histidine 577, histidine 581, cysteine 680, and histidine 684.

This sequence belongs to the class-II aminoacyl-tRNA synthetase family. The cofactor is Zn(2+).

It localises to the cytoplasm. The enzyme catalyses tRNA(Ala) + L-alanine + ATP = L-alanyl-tRNA(Ala) + AMP + diphosphate. In terms of biological role, catalyzes the attachment of alanine to tRNA(Ala) in a two-step reaction: alanine is first activated by ATP to form Ala-AMP and then transferred to the acceptor end of tRNA(Ala). Also edits incorrectly charged Ser-tRNA(Ala) and Gly-tRNA(Ala) via its editing domain. This is Alanine--tRNA ligase from Kocuria rhizophila (strain ATCC 9341 / DSM 348 / NBRC 103217 / DC2201).